Here is a 200-residue protein sequence, read N- to C-terminus: Large ribosomal subunit protein uL4 (200 aa).

Positions Gly38–Pro75 are disordered.

The protein belongs to the universal ribosomal protein uL4 family. In terms of assembly, part of the 50S ribosomal subunit.

Its function is as follows. One of the primary rRNA binding proteins, this protein initially binds near the 5'-end of the 23S rRNA. It is important during the early stages of 50S assembly. It makes multiple contacts with different domains of the 23S rRNA in the assembled 50S subunit and ribosome. Functionally, forms part of the polypeptide exit tunnel. This Azotobacter vinelandii (strain DJ / ATCC BAA-1303) protein is Large ribosomal subunit protein uL4.